Here is a 367-residue protein sequence, read N- to C-terminus: Protein-glutamate methylesterase/protein-glutamine glutaminase 1 (367 aa).

The Response regulatory domain maps to 9–126 (KVLCVDDSAL…RDGMLDYSEK (118 aa)). Asp60 bears the 4-aspartylphosphate mark. A CheB-type methylesterase domain is found at 168-360 (LVSTEKLIIV…RRIMARLASM (193 aa)). Residues Ser180, His206, and Asp302 contribute to the active site.

The protein belongs to the CheB family. Post-translationally, phosphorylated by CheA. Phosphorylation of the N-terminal regulatory domain activates the methylesterase activity.

It is found in the cytoplasm. The catalysed reaction is [protein]-L-glutamate 5-O-methyl ester + H2O = L-glutamyl-[protein] + methanol + H(+). It carries out the reaction L-glutaminyl-[protein] + H2O = L-glutamyl-[protein] + NH4(+). Its function is as follows. Involved in chemotaxis. Part of a chemotaxis signal transduction system that modulates chemotaxis in response to various stimuli. Catalyzes the demethylation of specific methylglutamate residues introduced into the chemoreceptors (methyl-accepting chemotaxis proteins or MCP) by CheR. Also mediates the irreversible deamidation of specific glutamine residues to glutamic acid. The chain is Protein-glutamate methylesterase/protein-glutamine glutaminase 1 from Burkholderia pseudomallei (strain K96243).